The sequence spans 184 residues: Peptidyl-tRNA hydrolase (184 aa).

Residue Tyr-14 participates in tRNA binding. Residue His-19 is the Proton acceptor of the active site. Positions 64, 66, and 112 each coordinate tRNA.

This sequence belongs to the PTH family. In terms of assembly, monomer.

The protein localises to the cytoplasm. It carries out the reaction an N-acyl-L-alpha-aminoacyl-tRNA + H2O = an N-acyl-L-amino acid + a tRNA + H(+). In terms of biological role, hydrolyzes ribosome-free peptidyl-tRNAs (with 1 or more amino acids incorporated), which drop off the ribosome during protein synthesis, or as a result of ribosome stalling. Catalyzes the release of premature peptidyl moieties from peptidyl-tRNA molecules trapped in stalled 50S ribosomal subunits, and thus maintains levels of free tRNAs and 50S ribosomes. The polypeptide is Peptidyl-tRNA hydrolase (Listeria welshimeri serovar 6b (strain ATCC 35897 / DSM 20650 / CCUG 15529 / CIP 8149 / NCTC 11857 / SLCC 5334 / V8)).